A 236-amino-acid chain; its full sequence is Ribose-5-phosphate isomerase (236 aa).

Residues 27-30, 84-87, and 97-100 each bind substrate; these read TGST, DGTD, and KGRG. The Proton acceptor role is filled by E106. K124 is a binding site for substrate.

This sequence belongs to the ribose 5-phosphate isomerase family. As to quaternary structure, homodimer.

The catalysed reaction is aldehydo-D-ribose 5-phosphate = D-ribulose 5-phosphate. The protein operates within carbohydrate degradation; pentose phosphate pathway; D-ribose 5-phosphate from D-ribulose 5-phosphate (non-oxidative stage): step 1/1. Involved in the first step of the non-oxidative branch of the pentose phosphate pathway. It catalyzes the reversible conversion of ribose-5-phosphate to ribulose 5-phosphate. The polypeptide is Ribose-5-phosphate isomerase (Plasmodium falciparum (isolate 3D7)).